The sequence spans 353 residues: Guanine nucleotide-binding protein subunit alpha (353 aa).

Gly2 carries N-myristoyl glycine lipidation. Cys3 carries the S-palmitoyl cysteine lipid modification. In terms of domain architecture, G-alpha spans 33–353 (NEIKMLLLGA…QLHLRECGLL (321 aa)). The tract at residues 36–49 (KMLLLGAGESGKST) is G1 motif. GTP-binding residues include Glu44, Ser45, Gly46, Lys47, Ser48, Thr49, Asp150, Leu175, Thr181, Gly203, Asn269, Lys270, Asp272, and Ala325. Position 48 (Ser48) interacts with Mg(2+). The interval 173–181 (DILRSRVKT) is G2 motif. Thr181 contacts Mg(2+). The G3 motif stretch occupies residues 196–205 (YKLFDVGGQR). The G4 motif stretch occupies residues 265–272 (ILFLNKID). Residues 323-328 (TCATDT) form a G5 motif region.

Belongs to the G-alpha family. G(q) subfamily. As to quaternary structure, g proteins are composed of 3 units; alpha, beta and gamma. The alpha chain contains the guanine nucleotide binding site. The cofactor is Mg(2+).

In terms of biological role, guanine nucleotide-binding proteins (G proteins) are involved as modulators or transducers in various transmembrane signaling systems. The polypeptide is Guanine nucleotide-binding protein subunit alpha (CGP1) (Coprinellus congregatus (Inky cap fungus)).